A 198-amino-acid polypeptide reads, in one-letter code: Ciliary neurotrophic factor (198 aa).

It belongs to the CNTF family. As to expression, nervous system.

It localises to the cytoplasm. Functionally, CNTF is a survival factor for various neuronal cell types. Seems to prevent the degeneration of motor axons after axotomy. This chain is Ciliary neurotrophic factor (Cntf), found in Mus musculus (Mouse).